The chain runs to 85 residues: Large ribosomal subunit protein bL27 (85 aa).

A disordered region spans residues 1 to 25 (MAHKKAGSSSKNGRDSNPQYLGVKR). A compositionally biased stretch (polar residues) spans 7 to 19 (GSSSKNGRDSNPQ).

This sequence belongs to the bacterial ribosomal protein bL27 family.

The sequence is that of Large ribosomal subunit protein bL27 from Micrococcus luteus (strain ATCC 4698 / DSM 20030 / JCM 1464 / CCM 169 / CCUG 5858 / IAM 1056 / NBRC 3333 / NCIMB 9278 / NCTC 2665 / VKM Ac-2230) (Micrococcus lysodeikticus).